Reading from the N-terminus, the 540-residue chain is Chaperonin GroEL (540 aa).

ATP is bound by residues 29 to 32, 86 to 90, glycine 413, 476 to 478, and aspartate 492; these read TLGP, DGTTT, and NAA.

It belongs to the chaperonin (HSP60) family. As to quaternary structure, forms a cylinder of 14 subunits composed of two heptameric rings stacked back-to-back. Interacts with the co-chaperonin GroES.

The protein resides in the cytoplasm. The catalysed reaction is ATP + H2O + a folded polypeptide = ADP + phosphate + an unfolded polypeptide.. Together with its co-chaperonin GroES, plays an essential role in assisting protein folding. The GroEL-GroES system forms a nano-cage that allows encapsulation of the non-native substrate proteins and provides a physical environment optimized to promote and accelerate protein folding. This is Chaperonin GroEL from Streptococcus constellatus.